The sequence spans 273 residues: NAD-dependent protein deacylase (273 aa).

In terms of domain architecture, Deacetylase sirtuin-type spans Met1–Ile269. Residues Gly25–Trp44 and Gln107–Asp110 each bind NAD(+). The Proton acceptor role is filled by His125. 4 residues coordinate Zn(2+): Cys133, Cys136, Cys173, and Cys176. NAD(+) contacts are provided by residues Gly211 to Ser213, Asn237 to Asn239, and Thr255.

The protein belongs to the sirtuin family. Class III subfamily. Zn(2+) is required as a cofactor.

Its subcellular location is the cytoplasm. The enzyme catalyses N(6)-acetyl-L-lysyl-[protein] + NAD(+) + H2O = 2''-O-acetyl-ADP-D-ribose + nicotinamide + L-lysyl-[protein]. Functionally, NAD-dependent protein deacetylase which modulates the activities of several proteins which are inactive in their acetylated form. This is NAD-dependent protein deacylase (cobB) from Desulfosudis oleivorans (strain DSM 6200 / JCM 39069 / Hxd3) (Desulfococcus oleovorans).